Reading from the N-terminus, the 93-residue chain is MEVGEVITLVDEEQNEFEFAVIDLLEVEGKKYAILVPAVEEDEEELEDEEEAVILRLEMDEDGNEILVDLEDEEWEMVADAWTEKMEDEGSDE.

This sequence belongs to the UPF0473 family.

The sequence is that of UPF0473 protein CHY_0543 from Carboxydothermus hydrogenoformans (strain ATCC BAA-161 / DSM 6008 / Z-2901).